A 385-amino-acid chain; its full sequence is Homoserine O-succinyltransferase (385 aa).

Positions 45 to 355 constitute an AB hydrolase-1 domain; it reads NAVLVCHALN…PHGHDAFLLD (311 aa). Ser-151 acts as the Nucleophile in catalysis. Arg-221 provides a ligand contact to substrate. Residues Asp-316 and His-349 contribute to the active site. Asp-350 lines the substrate pocket.

It belongs to the AB hydrolase superfamily. MetX family. Homodimer.

It localises to the cytoplasm. The enzyme catalyses L-homoserine + succinyl-CoA = O-succinyl-L-homoserine + CoA. Its pathway is amino-acid biosynthesis; L-methionine biosynthesis via de novo pathway; O-succinyl-L-homoserine from L-homoserine: step 1/1. Functionally, transfers a succinyl group from succinyl-CoA to L-homoserine, forming succinyl-L-homoserine. The sequence is that of Homoserine O-succinyltransferase from Janthinobacterium sp. (strain Marseille) (Minibacterium massiliensis).